The following is a 250-amino-acid chain: Recombination protein RecR (250 aa).

The C4-type zinc finger occupies 56–71; it reads CRICHNISQEDVCRIC. One can recognise a Toprim domain in the interval 79-227; sequence SIICVVEESK…TVTRLASGIP (149 aa). Residues 148 to 172 are disordered; the sequence is LGDADTPADGESSGADAAETGNAKT.

It belongs to the RecR family.

In terms of biological role, may play a role in DNA repair. It seems to be involved in an RecBC-independent recombinational process of DNA repair. It may act with RecF and RecO. This is Recombination protein RecR from Corynebacterium jeikeium (strain K411).